Here is a 512-residue protein sequence, read N- to C-terminus: Probable DNA ligase (512 aa).

Residue Glu-208 coordinates ATP. The active-site N6-AMP-lysine intermediate is Lys-210. Arg-215, Arg-230, Glu-259, Phe-299, Arg-374, and Lys-380 together coordinate ATP.

This sequence belongs to the ATP-dependent DNA ligase family. Mg(2+) serves as cofactor.

It carries out the reaction ATP + (deoxyribonucleotide)n-3'-hydroxyl + 5'-phospho-(deoxyribonucleotide)m = (deoxyribonucleotide)n+m + AMP + diphosphate.. In terms of biological role, DNA ligase that seals nicks in double-stranded DNA during DNA replication, DNA recombination and DNA repair. This is Probable DNA ligase from Streptomyces coelicolor (strain ATCC BAA-471 / A3(2) / M145).